A 265-amino-acid chain; its full sequence is Tryptophan synthase alpha chain (265 aa).

Catalysis depends on proton acceptor residues E47 and D58.

It belongs to the TrpA family. In terms of assembly, tetramer of two alpha and two beta chains.

The catalysed reaction is (1S,2R)-1-C-(indol-3-yl)glycerol 3-phosphate + L-serine = D-glyceraldehyde 3-phosphate + L-tryptophan + H2O. Its pathway is amino-acid biosynthesis; L-tryptophan biosynthesis; L-tryptophan from chorismate: step 5/5. In terms of biological role, the alpha subunit is responsible for the aldol cleavage of indoleglycerol phosphate to indole and glyceraldehyde 3-phosphate. The chain is Tryptophan synthase alpha chain from Methanoregula boonei (strain DSM 21154 / JCM 14090 / 6A8).